We begin with the raw amino-acid sequence, 347 residues long: 4-hydroxy-2-oxovalerate aldolase 2 (347 aa).

Residues 7-259 form the Pyruvate carboxyltransferase domain; sequence VRITDTSLRD…KTGIDFFDIA (253 aa). Residue 15–16 coordinates substrate; that stretch reads RD. Asp-16 is a binding site for Mn(2+). Catalysis depends on His-19, which acts as the Proton acceptor. Substrate is bound by residues Ser-169 and His-198. Mn(2+) contacts are provided by His-198 and His-200. Position 289 (Tyr-289) interacts with substrate.

The protein belongs to the 4-hydroxy-2-oxovalerate aldolase family.

The catalysed reaction is (S)-4-hydroxy-2-oxopentanoate = acetaldehyde + pyruvate. The protein is 4-hydroxy-2-oxovalerate aldolase 2 of Mycobacterium marinum (strain ATCC BAA-535 / M).